The sequence spans 918 residues: DNA ligase 1 (918 aa).

Polar residues predominate over residues 1-15 (MQRSIMSFFQPTTTE). The interval 1-271 (MQRSIMSFFQ…DPTNYNPSKS (271 aa)) is disordered. The segment covering 16-54 (GKAKKPEKEIPSSIREKEPPPKVALKERNRAVPESDSPV) has biased composition (basic and acidic residues). 4 positions are modified to phosphoserine: serine 50, serine 52, serine 66, and serine 67. Residue threonine 78 is modified to Phosphothreonine. Over residues 81-92 (VQKPVSDSKQSS) the composition is skewed to low complexity. Residues 100–114 (PENSPVFNCSPSMDI) are compositionally biased toward polar residues. A compositionally biased stretch (basic residues) spans 120–130 (PKRRTARKQLP). Position 145 is an N6-acetyllysine (lysine 145). Threonine 195 carries the post-translational modification Phosphothreonine. At lysine 227 the chain carries N6-acetyllysine. Phosphoserine occurs at positions 230 and 231. Position 234 is a phosphothreonine (threonine 234). Over residues 240–259 (VKTEVKQEESDTPRKEETKG) the composition is skewed to basic and acidic residues. Position 566 (glutamate 566) interacts with ATP. Lysine 568 acts as the N6-AMP-lysine intermediate in catalysis. ATP-binding residues include arginine 573 and glutamate 621. Glutamate 621 is a binding site for Mg(2+). Residues 642-644 (KRK) are interaction with target DNA. Position 720 (glutamate 720) interacts with Mg(2+). ATP contacts are provided by lysine 725 and lysine 744. Position 798 is a phosphothreonine (threonine 798). Residues serine 801, serine 908, serine 909, and serine 913 each carry the phosphoserine modification. The tract at residues 881–918 (DKQPEQATTSDQVASLYRKQSQIQNQQSSDLDSDVEDY) is disordered. The span at 885–910 (EQATTSDQVASLYRKQSQIQNQQSSD) shows a compositional bias: polar residues.

It belongs to the ATP-dependent DNA ligase family. Interacts with PCNA. Interacts with POLB. Requires Mg(2+) as cofactor.

Its subcellular location is the nucleus. It carries out the reaction ATP + (deoxyribonucleotide)n-3'-hydroxyl + 5'-phospho-(deoxyribonucleotide)m = (deoxyribonucleotide)n+m + AMP + diphosphate.. Its function is as follows. DNA ligase that seals nicks in double-stranded during DNA repair. Also involved in DNA replication and DNA recombination. This chain is DNA ligase 1 (Lig1), found in Rattus norvegicus (Rat).